Consider the following 113-residue polypeptide: Putative glycerol transporter Lin0367 (113 aa).

A run of 4 helical transmembrane segments spans residues 3–23 (IGIA…IRMM), 30–50 (EWGA…VWTI), 63–83 (GTVW…ASLL), and 92–112 (VVNL…LSLF).

The protein localises to the membrane. Its function is as follows. Could be involved in the glycerol uptake either via facilitated diffusion or active transport. The sequence is that of Putative glycerol transporter Lin0367 from Listeria innocua serovar 6a (strain ATCC BAA-680 / CLIP 11262).